We begin with the raw amino-acid sequence, 144 residues long: Phosphomevalonate dehydratase small subunit (144 aa).

Residue Ser-65 is the Proton acceptor of the active site.

This sequence belongs to the AcnX type II small subunit family. In terms of assembly, heterodimer composed of a large subunit (PMDh-L) and a small subunit (PMDh-S).

The catalysed reaction is (R)-5-phosphomevalonate = (2E)-3-methyl-5-phosphooxypent-2-enoate + H2O. The protein operates within isoprenoid biosynthesis; isopentenyl diphosphate biosynthesis via mevalonate pathway. Its function is as follows. Component of a hydro-lyase that catalyzes the dehydration of mevalonate 5-phosphate (MVA5P) to form trans-anhydromevalonate 5-phosphate (tAHMP). Involved in the archaeal mevalonate (MVA) pathway, which provides fundamental precursors for isoprenoid biosynthesis, such as isopentenyl diphosphate (IPP) and dimethylallyl diphosphate (DMAPP). The protein is Phosphomevalonate dehydratase small subunit of Methanosarcina acetivorans (strain ATCC 35395 / DSM 2834 / JCM 12185 / C2A).